The chain runs to 229 residues: Probable coenzyme A transferase subunit alpha (229 aa).

26 to 32 contacts CoA; it reads GGFGGVG.

Belongs to the 3-oxoacid CoA-transferase subunit A family. In terms of assembly, heterodimer of a subunit alpha and a subunit beta.

This is Probable coenzyme A transferase subunit alpha (yodS) from Bacillus subtilis (strain 168).